Here is a 405-residue protein sequence, read N- to C-terminus: Histidine decarboxylase (405 aa).

H121 is a binding site for substrate. Residue K234 is modified to N6-(pyridoxal phosphate)lysine.

Belongs to the group II decarboxylase family. As to quaternary structure, homotetramer. The cofactor is pyridoxal 5'-phosphate.

It carries out the reaction L-histidine + H(+) = histamine + CO2. Its pathway is siderophore biosynthesis; pseudomonine biosynthesis. The polypeptide is Histidine decarboxylase (Pseudomonas fluorescens).